The following is a 660-amino-acid chain: Acetyl-coenzyme A synthetase (660 aa).

CoA contacts are provided by residues 197–200 and T317; that span reads RGGK. ATP is bound by residues 397-399, 421-426, D512, and R528; these read GEP and DTWWQT. A CoA-binding site is contributed by S536. Position 539 (R539) interacts with ATP. 3 residues coordinate Mg(2+): V550, H552, and V555. An N6-acetyllysine modification is found at K625.

This sequence belongs to the ATP-dependent AMP-binding enzyme family. Mg(2+) serves as cofactor. In terms of processing, acetylated. Deacetylation by the SIR2-homolog deacetylase activates the enzyme.

The catalysed reaction is acetate + ATP + CoA = acetyl-CoA + AMP + diphosphate. Its function is as follows. Catalyzes the conversion of acetate into acetyl-CoA (AcCoA), an essential intermediate at the junction of anabolic and catabolic pathways. AcsA undergoes a two-step reaction. In the first half reaction, AcsA combines acetate with ATP to form acetyl-adenylate (AcAMP) intermediate. In the second half reaction, it can then transfer the acetyl group from AcAMP to the sulfhydryl group of CoA, forming the product AcCoA. The sequence is that of Acetyl-coenzyme A synthetase from Burkholderia lata (strain ATCC 17760 / DSM 23089 / LMG 22485 / NCIMB 9086 / R18194 / 383).